The sequence spans 169 residues: Ribosome maturation factor RimM (169 aa).

In terms of domain architecture, PRC barrel spans 97–169; sequence EDEVYFKDLI…KIVVDWEYDY (73 aa).

Belongs to the RimM family. Binds ribosomal protein uS19.

It is found in the cytoplasm. Functionally, an accessory protein needed during the final step in the assembly of 30S ribosomal subunit, possibly for assembly of the head region. Essential for efficient processing of 16S rRNA. May be needed both before and after RbfA during the maturation of 16S rRNA. It has affinity for free ribosomal 30S subunits but not for 70S ribosomes. The protein is Ribosome maturation factor RimM of Francisella tularensis subsp. holarctica (strain FTNF002-00 / FTA).